The sequence spans 695 residues: Elongation factor G 1 (695 aa).

The tr-type G domain maps to 6–284; sequence KKVRNIGISA…VTRYLPCPAD (279 aa). GTP is bound by residues 15–22, 82–86, and 136–139; these read AHIDSGKT, DTPGH, and NKCD.

The protein belongs to the TRAFAC class translation factor GTPase superfamily. Classic translation factor GTPase family. EF-G/EF-2 subfamily.

The protein localises to the cytoplasm. Functionally, catalyzes the GTP-dependent ribosomal translocation step during translation elongation. During this step, the ribosome changes from the pre-translocational (PRE) to the post-translocational (POST) state as the newly formed A-site-bound peptidyl-tRNA and P-site-bound deacylated tRNA move to the P and E sites, respectively. Catalyzes the coordinated movement of the two tRNA molecules, the mRNA and conformational changes in the ribosome. This chain is Elongation factor G 1, found in Syntrophus aciditrophicus (strain SB).